The primary structure comprises 346 residues: Putative toluene-4-sulfonate monooxygenase system iron-sulfur subunit TsaM2 (346 aa).

The Rieske domain occupies 7–108 (WYVAGMATDC…LVERHGLLWI (102 aa)). [2Fe-2S] cluster-binding residues include Cys-47, His-49, Cys-66, and His-69.

In terms of assembly, homotetramer. Part of the p-toluenesulfonate methyl-monooxygenase complex TsaBM, comprising the reductase TsaB and the oxygenase TsaM. [2Fe-2S] cluster serves as cofactor.

The enzyme catalyses toluene-4-sulfonate + NADH + O2 + H(+) = 4-(hydroxymethyl)benzenesulfonate + NAD(+) + H2O. Involved in the toluene-4-sulfonate degradation pathway. Does not discriminate between the sulfonate and the carboxyl substituents and can also be involved in the p-toluenecarboxylate degradation pathway. The polypeptide is Putative toluene-4-sulfonate monooxygenase system iron-sulfur subunit TsaM2 (tsaM2) (Comamonas testosteroni (Pseudomonas testosteroni)).